Here is a 137-residue protein sequence, read N- to C-terminus: Small ribosomal subunit protein uS9 (137 aa).

Belongs to the universal ribosomal protein uS9 family.

The sequence is that of Small ribosomal subunit protein uS9 from Picosynechococcus sp. (strain ATCC 27264 / PCC 7002 / PR-6) (Agmenellum quadruplicatum).